A 288-amino-acid chain; its full sequence is 4-diphosphocytidyl-2-C-methyl-D-erythritol kinase (288 aa).

Lysine 22 is an active-site residue. 104–114 (PSQAGLGGGSS) provides a ligand contact to ATP. Residue aspartate 146 is part of the active site.

It belongs to the GHMP kinase family. IspE subfamily.

The enzyme catalyses 4-CDP-2-C-methyl-D-erythritol + ATP = 4-CDP-2-C-methyl-D-erythritol 2-phosphate + ADP + H(+). It functions in the pathway isoprenoid biosynthesis; isopentenyl diphosphate biosynthesis via DXP pathway; isopentenyl diphosphate from 1-deoxy-D-xylulose 5-phosphate: step 3/6. Functionally, catalyzes the phosphorylation of the position 2 hydroxy group of 4-diphosphocytidyl-2C-methyl-D-erythritol. The sequence is that of 4-diphosphocytidyl-2-C-methyl-D-erythritol kinase from Protochlamydia amoebophila (strain UWE25).